The chain runs to 127 residues: MAIWQGRSLKKPSGGRIVLARKKRKRELGREPSNTRVAEQDKRKIIRTYGGNRKVRLTAAAYANVFDKSGKGRKVRIIRVIENPANRQFARRNIITKGAIIETEIGKAKVTSRPGQDGVVNAILLEE.

Belongs to the eukaryotic ribosomal protein eS8 family. In terms of assembly, part of the 30S ribosomal subunit.

This is Small ribosomal subunit protein eS8 from Pyrococcus furiosus (strain ATCC 43587 / DSM 3638 / JCM 8422 / Vc1).